Here is a 422-residue protein sequence, read N- to C-terminus: Elongation factor 1-alpha (422 aa).

The tr-type G domain occupies 5 to 221 (KPHQNLAVIG…NDLPEPQPPT (217 aa)). The interval 14-21 (GHVDHGKS) is G1. A GTP-binding site is contributed by 14–21 (GHVDHGKS). Mg(2+) is bound at residue Ser-21. The interval 70 to 74 (GVTID) is G2. The interval 91–94 (DCPG) is G3. GTP is bound by residues 91–95 (DCPGH) and 146–149 (NKMD). The interval 146-149 (NKMD) is G4. The segment at 185 to 187 (SAF) is G5.

It belongs to the TRAFAC class translation factor GTPase superfamily. Classic translation factor GTPase family. EF-Tu/EF-1A subfamily.

The protein resides in the cytoplasm. The catalysed reaction is GTP + H2O = GDP + phosphate + H(+). Functionally, GTP hydrolase that promotes the GTP-dependent binding of aminoacyl-tRNA to the A-site of ribosomes during protein biosynthesis. This chain is Elongation factor 1-alpha, found in Natronomonas pharaonis (strain ATCC 35678 / DSM 2160 / CIP 103997 / JCM 8858 / NBRC 14720 / NCIMB 2260 / Gabara) (Halobacterium pharaonis).